The following is a 221-amino-acid chain: Chalcone--flavanone isomerase 2 (221 aa).

Positions 50, 115, and 192 each coordinate substrate.

This sequence belongs to the chalcone isomerase family.

The catalysed reaction is a chalcone = a flavanone.. It participates in secondary metabolite biosynthesis; flavonoid biosynthesis. Catalyzes the intramolecular cyclization of bicyclic chalcones into tricyclic (S)-flavanones. Responsible for the isomerization of 4,2',4',6'-tetrahydroxychalcone (also termed chalcone) into naringenin. This chain is Chalcone--flavanone isomerase 2 (CHI2), found in Lotus japonicus (Lotus corniculatus var. japonicus).